The sequence spans 292 residues: Elongation factor Ts (292 aa).

The tract at residues 80-83 (TDFV) is involved in Mg(2+) ion dislocation from EF-Tu.

It belongs to the EF-Ts family.

Its subcellular location is the cytoplasm. Its function is as follows. Associates with the EF-Tu.GDP complex and induces the exchange of GDP to GTP. It remains bound to the aminoacyl-tRNA.EF-Tu.GTP complex up to the GTP hydrolysis stage on the ribosome. The protein is Elongation factor Ts of Cupriavidus pinatubonensis (strain JMP 134 / LMG 1197) (Cupriavidus necator (strain JMP 134)).